The chain runs to 183 residues: uncharacterized protein (183 aa).

It belongs to the herpesviridae US1 family.

This is an uncharacterized protein from Human cytomegalovirus (strain AD169) (HHV-5).